Reading from the N-terminus, the 462-residue chain is Argininosuccinate lyase (462 aa).

The protein belongs to the lyase 1 family. Argininosuccinate lyase subfamily.

The protein localises to the cytoplasm. It catalyses the reaction 2-(N(omega)-L-arginino)succinate = fumarate + L-arginine. It functions in the pathway amino-acid biosynthesis; L-arginine biosynthesis; L-arginine from L-ornithine and carbamoyl phosphate: step 3/3. This is Argininosuccinate lyase from Streptococcus agalactiae serotype V (strain ATCC BAA-611 / 2603 V/R).